The chain runs to 177 residues: MDEILVLVDKHDNPIGSAGKADIHQKGMLHRAFSIFVFDNKGNLLLQKRAATKYHSAGLWTNSCCGHPRVGEALEAAAHRRLGEEMGFDCPLKKVSSFIYHAILPNNLIEYEYDHVFIGRFDKEPIINLDEVSDYKWVNLLKLRALINNAPDVYTVWFKKIINGLSYQDIEEWQRLI.

Positions 24 and 30 each coordinate Mn(2+). A Nudix hydrolase domain is found at 28-160 (MLHRAFSIFV…PDVYTVWFKK (133 aa)). Residue Cys-65 is part of the active site. Cys-65 is a binding site for Mg(2+). His-67 lines the Mn(2+) pocket. Glu-85 serves as a coordination point for Mg(2+). Mn(2+) is bound by residues Glu-110 and Glu-112. Residue Glu-112 is part of the active site.

The protein belongs to the IPP isomerase type 1 family. Homodimer. The cofactor is Mg(2+). Requires Mn(2+) as cofactor.

It is found in the cytoplasm. The enzyme catalyses isopentenyl diphosphate = dimethylallyl diphosphate. It functions in the pathway isoprenoid biosynthesis; dimethylallyl diphosphate biosynthesis; dimethylallyl diphosphate from isopentenyl diphosphate: step 1/1. Catalyzes the 1,3-allylic rearrangement of the homoallylic substrate isopentenyl (IPP) to its highly electrophilic allylic isomer, dimethylallyl diphosphate (DMAPP). The sequence is that of Isopentenyl-diphosphate Delta-isomerase 2 from Photorhabdus laumondii subsp. laumondii (strain DSM 15139 / CIP 105565 / TT01) (Photorhabdus luminescens subsp. laumondii).